We begin with the raw amino-acid sequence, 649 residues long: Acetylcholinesterase (649 aa).

Positions 1–38 are cleaved as a signal peptide; that stretch reads MAISCRQSRVLPMSLPLPLTIPLPLVLVLSLHLSGVCG. A disulfide bridge links cysteine 104 with cysteine 131. N-linked (GlcNAc...) asparagine glycans are attached at residues asparagine 126 and asparagine 174. The active-site Acyl-ester intermediate is serine 276. Cysteine 330 and cysteine 345 form a disulfide bridge. N-linked (GlcNAc...) asparagine glycosylation is present at asparagine 331. Residues glutamate 405 and histidine 518 each act as charge relay system in the active site. A disulfide bridge connects residues cysteine 480 and cysteine 598. Asparagine 531 is a glycosylation site (N-linked (GlcNAc...) asparagine). A lipid anchor (GPI-anchor amidated serine) is attached at serine 619. A propeptide spans 620-649 (removed in mature form); the sequence is GSASISPRLQLLGIAALIYICAALRTKRVF.

This sequence belongs to the type-B carboxylesterase/lipase family. Homodimer; disulfide-linked. The active unit is formed by non-covalent association of the 55 kDa and 16 kDa subunits. Post-translationally, proteolytic cleavage into the 16 kDa subunit and the 55 kDa subunits originates from the hydrophilic peptide, aa 148-180, and is associated with excretion out of the cell. Neither N-glycosylation nor dimerization is required for enzyme activity or substrate specificity, but protects the protein against proteolytic digestion.

It localises to the synapse. The protein localises to the cell membrane. It catalyses the reaction acetylcholine + H2O = choline + acetate + H(+). In terms of biological role, rapidly hydrolyzes choline released into the synapse. It can hydrolyze butyrylthiocholine. The protein is Acetylcholinesterase (Ace) of Drosophila melanogaster (Fruit fly).